A 143-amino-acid polypeptide reads, in one-letter code: Ribosome maturation factor RimP (143 aa).

The protein belongs to the RimP family.

Its subcellular location is the cytoplasm. Its function is as follows. Required for maturation of 30S ribosomal subunits. The chain is Ribosome maturation factor RimP from Neisseria meningitidis serogroup C (strain 053442).